Consider the following 35-residue polypeptide: uncharacterized protein (35 aa).

The chain crosses the membrane as a helical span at residues 10–30; the sequence is LMITASFFAIFIIIVVSVLLL.

The protein resides in the membrane. This is an uncharacterized protein from Salmonella paratyphi A (strain ATCC 9150 / SARB42).